A 567-amino-acid chain; its full sequence is uncharacterized protein (567 aa).

10 helical membrane-spanning segments follow: residues 65 to 85 (LSLF…PSVA), 92 to 112 (LWYV…FFLI), 190 to 210 (WQWF…ACLP), 220 to 240 (VATY…LAYG), 302 to 322 (AIVM…IIVA), 353 to 373 (LGIL…ALIA), 412 to 432 (IISI…DAVF), 434 to 454 (VGAV…VFFT), 473 to 493 (IGLL…FPSV), and 503 to 523 (WTCL…AISA).

This sequence belongs to the amino acid-polyamine-organocation (APC) superfamily.

It is found in the membrane. This is an uncharacterized protein from Schizosaccharomyces pombe (strain 972 / ATCC 24843) (Fission yeast).